The chain runs to 179 residues: ATP synthase subunit delta (179 aa).

The protein belongs to the ATPase delta chain family. As to quaternary structure, F-type ATPases have 2 components, F(1) - the catalytic core - and F(0) - the membrane proton channel. F(1) has five subunits: alpha(3), beta(3), gamma(1), delta(1), epsilon(1). F(0) has three main subunits: a(1), b(2) and c(10-14). The alpha and beta chains form an alternating ring which encloses part of the gamma chain. F(1) is attached to F(0) by a central stalk formed by the gamma and epsilon chains, while a peripheral stalk is formed by the delta and b chains.

The protein localises to the cell inner membrane. In terms of biological role, f(1)F(0) ATP synthase produces ATP from ADP in the presence of a proton or sodium gradient. F-type ATPases consist of two structural domains, F(1) containing the extramembraneous catalytic core and F(0) containing the membrane proton channel, linked together by a central stalk and a peripheral stalk. During catalysis, ATP synthesis in the catalytic domain of F(1) is coupled via a rotary mechanism of the central stalk subunits to proton translocation. Functionally, this protein is part of the stalk that links CF(0) to CF(1). It either transmits conformational changes from CF(0) to CF(1) or is implicated in proton conduction. The chain is ATP synthase subunit delta from Anaeromyxobacter dehalogenans (strain 2CP-1 / ATCC BAA-258).